We begin with the raw amino-acid sequence, 316 residues long: MFKFDKKQEVFEIGGVKFGGQPGEFPTVLVSTMFYARHKIVTDEDKGIFDRAAAETLWNTQVSLSDATGNPYVNQIVGETPESIKRYIDWFVEIDDRTPFLIDSSAGNVRAAAAQYCTEIGVADRAIHNSINASIEQEEIDVLTESDVEAAIVLAFNATDPTVKGKMDILEVGGSGLTKGMLQISEECGIKYPLIDVAAMPLGAGSGPTIRSIPTMKAKFGLPIGGGYHNMASAWDWLRKFKKTQPDAKAIYMPADIGTNLVAQIAGSDYLLYGPIENVNQIFPAVAMVDIMLGETAKDLGVEIADLENHPVTKLT.

Belongs to the MtrH family. As to quaternary structure, the complex is composed of 8 subunits; MtrA, MtrB, MtrC, MtrD, MtrE, MtrF, MtrG and MtrH.

It catalyses the reaction 5-methyl-5,6,7,8-tetrahydromethanopterin + coenzyme M + 2 Na(+)(in) = 5,6,7,8-tetrahydromethanopterin + methyl-coenzyme M + 2 Na(+)(out). It functions in the pathway one-carbon metabolism; methanogenesis from CO(2); methyl-coenzyme M from 5,10-methylene-5,6,7,8-tetrahydromethanopterin: step 2/2. Part of a complex that catalyzes the formation of methyl-coenzyme M and tetrahydromethanopterin from coenzyme M and methyl-tetrahydromethanopterin. This is an energy-conserving, sodium-ion translocating step. MtrH catalyzes the transfer of the methyl group from methyl-tetrahydromethanopterin to the corrinoid prosthetic group of MtrA. The sequence is that of Tetrahydromethanopterin S-methyltransferase subunit H from Methanosarcina barkeri (strain Fusaro / DSM 804).